Here is a 72-residue protein sequence, read N- to C-terminus: Cytochrome c oxidase copper chaperone 2 (72 aa).

The Cu cation site is built by Cys32 and Cys33. A CHCH domain is found at 32–72 (CCACPDTKKLRDECIVEHGESACTKWIEAHILCLRSEGFKV). Short sequence motifs (cx9C motif) lie at residues 35–45 (CPDTKKLRDEC) and 54–64 (CTKWIEAHILC). 2 cysteine pairs are disulfide-bonded: Cys35/Cys64 and Cys45/Cys54.

The protein belongs to the COX17 family.

The protein resides in the mitochondrion intermembrane space. Functionally, copper chaperone for cytochrome c oxidase (COX). Binds 2 copper ions and delivers them to the Cu(A) site of COX. The sequence is that of Cytochrome c oxidase copper chaperone 2 (COX17-2) from Arabidopsis thaliana (Mouse-ear cress).